Here is a 237-residue protein sequence, read N- to C-terminus: V-type proton ATPase subunit E3 (237 aa).

Methionine 1 carries the N-acetylmethionine modification. Residues 9-67 (QIQQMVRFIRQEAEEKANEISISSEEEFNIEKLQLVEAEKKKIRQEYEKKEKQVDVRKK) are a coiled coil.

The protein belongs to the V-ATPase E subunit family. In terms of assembly, V-ATPase is a heteromultimeric enzyme composed of a peripheral catalytic V1 complex (components A to H) attached to an integral membrane V0 proton pore complex (components: a, c, c'', d and e).

Its subcellular location is the vacuole membrane. Its function is as follows. Subunit of the peripheral V1 complex of vacuolar ATPase essential for assembly or catalytic function. V-ATPase is responsible for acidifying a variety of intracellular compartments in eukaryotic cells. The protein is V-type proton ATPase subunit E3 (VHA-E3) of Arabidopsis thaliana (Mouse-ear cress).